Reading from the N-terminus, the 714-residue chain is ATP-dependent zinc metalloprotease FtsH (714 aa).

The Cytoplasmic segment spans residues 1-75 (MEKPRRLRPR…KNPMEPRQQQ (75 aa)). The helical transmembrane segment at 76–96 (FSLWYVLVTILAMLAIQTLFV) threads the bilayer. The Periplasmic portion of the chain corresponds to 97–188 (SGHVETIPYS…FVGQPDNKWL (92 aa)). A helical transmembrane segment spans residues 189 to 209 (STILSWVVPAVIFFGIWSFLI). Residues 210 to 714 (KRVGGAAGSM…GKPDQKTQGT (505 aa)) lie on the Cytoplasmic side of the membrane. Residue 280-287 (GAPGTGKT) participates in ATP binding. His502 lines the Zn(2+) pocket. Glu503 is a catalytic residue. 2 residues coordinate Zn(2+): His506 and Asp579. Residues 688–714 (PMPPPKPVANIEESTATGKPDQKTQGT) are disordered. The segment covering 699–714 (EESTATGKPDQKTQGT) has biased composition (polar residues).

In the central section; belongs to the AAA ATPase family. This sequence in the C-terminal section; belongs to the peptidase M41 family. As to quaternary structure, homohexamer. Zn(2+) serves as cofactor.

It is found in the cell inner membrane. In terms of biological role, acts as a processive, ATP-dependent zinc metallopeptidase for both cytoplasmic and membrane proteins. Plays a role in the quality control of integral membrane proteins. The protein is ATP-dependent zinc metalloprotease FtsH of Ralstonia pickettii (strain 12J).